The chain runs to 343 residues: Methylthioribose-1-phosphate isomerase (343 aa).

Substrate-binding positions include 48–50 (RGA), Arg-88, and Gln-193. The Proton donor role is filled by Asp-234. 244–245 (NK) lines the substrate pocket.

This sequence belongs to the eIF-2B alpha/beta/delta subunits family. MtnA subfamily.

The catalysed reaction is 5-(methylsulfanyl)-alpha-D-ribose 1-phosphate = 5-(methylsulfanyl)-D-ribulose 1-phosphate. It participates in amino-acid biosynthesis; L-methionine biosynthesis via salvage pathway; L-methionine from S-methyl-5-thio-alpha-D-ribose 1-phosphate: step 1/6. Its function is as follows. Catalyzes the interconversion of methylthioribose-1-phosphate (MTR-1-P) into methylthioribulose-1-phosphate (MTRu-1-P). This is Methylthioribose-1-phosphate isomerase from Thermotoga neapolitana (strain ATCC 49049 / DSM 4359 / NBRC 107923 / NS-E).